Reading from the N-terminus, the 382-residue chain is Alkane 1-monooxygenase 2 (382 aa).

4 consecutive transmembrane segments (helical) span residues 17-37, 45-65, 88-108, and 114-134; these read GYLA…FVGV, WAWF…YLVG, VSAI…GHIF, and GLLG…IIAI. His-138, His-142, His-168, His-172, and His-173 together coordinate Fe cation. The helical transmembrane segment at 236 to 256 threads the bilayer; it reads ALFAATFGLLWGWQGVVFFLG. Residues His-312, His-315, and His-316 each coordinate Fe cation.

The protein belongs to the fatty acid desaturase type 1 family. AlkB subfamily. Fe(3+) is required as a cofactor.

It localises to the cell inner membrane. It carries out the reaction octane + 2 reduced [rubredoxin] + O2 + 2 H(+) = 2 oxidized [rubredoxin] + octan-1-ol + H2O. It participates in hydrocarbon metabolism; alkane degradation. In terms of biological role, catalyzes the hydroxylation of n-alkanes in the presence of a NADH-rubredoxin reductase and rubredoxin. It preferably hydroxylases C8-C16 hydrocarbons. This Alcanivorax borkumensis (strain ATCC 700651 / DSM 11573 / NCIMB 13689 / SK2) protein is Alkane 1-monooxygenase 2 (alkB2).